Here is a 76-residue protein sequence, read N- to C-terminus: Probable insulin-like peptide alpha-type 1 (76 aa).

A signal peptide spans 1–24 (MKTYSFFVLFIVFIFFISSSKSHS). Cystine bridges form between C32/C60, C44/C73, and C48/C74.

The protein belongs to the insulin family.

The protein resides in the secreted. The protein is Probable insulin-like peptide alpha-type 1 (ins-21) of Caenorhabditis elegans.